Reading from the N-terminus, the 950-residue chain is Leucine--tRNA ligase (950 aa).

The 'HIGH' region signature appears at 66–77; it reads PYPSGAGLHVGH. Positions 721-725 match the 'KMSKS' region motif; the sequence is KIGKS. Position 724 (K724) interacts with ATP.

This sequence belongs to the class-I aminoacyl-tRNA synthetase family.

It localises to the cytoplasm. It carries out the reaction tRNA(Leu) + L-leucine + ATP = L-leucyl-tRNA(Leu) + AMP + diphosphate. This is Leucine--tRNA ligase from Nocardia farcinica (strain IFM 10152).